Reading from the N-terminus, the 294-residue chain is MFSLKKLKSKLVGVSFVFSGVIALGTGVGLTSEHKYEHSPTLVLHEGETNSVGPRKITSEPWFYPVVGAGAGLIVVSLLLGLGIGIPIAKKKERMMIQEREEHQKMVESLGIIEEQNKTEAIEPTEEVNTQEPTQPAGVNVANNPQMGINQPQINPQFGPNPQQRINPQCFGGPMQPNQMGMRPGFNQMPPQMGGMPPNQMGMRPGFNQMPPQMGGMPPRPNFPNQMPNMNQPRPGFRPQPGGGVPMGNKAGGGFNHPGTPMGPNRMNFPNQGMNQPPHMAGPRAGFPPQNGPR.

Transmembrane regions (helical) follow at residues Leu-11 to Thr-31 and Val-66 to Ile-86. Tandem repeats lie at residues Gly-172–Met-193 and Gly-194–Met-214. The segment at Gly-172–Met-214 is 2 X 22 AA repeats. A disordered region spans residues Arg-234–Arg-294. Gly residues predominate over residues Pro-241–Asn-256.

The protein resides in the cell projection. Its subcellular location is the attachment organelle membrane. Its function is as follows. Adhesin necessary for successful cytadherence and virulence. The chain is P32 adhesin (mgc2) from Mycoplasmoides gallisepticum (strain R(low / passage 15 / clone 2)) (Mycoplasma gallisepticum).